The chain runs to 220 residues: Thiopurine S-methyltransferase (220 aa).

Residues Trp-10, Leu-45, Glu-66, and Arg-123 each contribute to the S-adenosyl-L-methionine site.

It belongs to the class I-like SAM-binding methyltransferase superfamily. TPMT family.

It is found in the cytoplasm. The catalysed reaction is S-adenosyl-L-methionine + a thiopurine = S-adenosyl-L-homocysteine + a thiopurine S-methylether.. The sequence is that of Thiopurine S-methyltransferase from Nitrosomonas eutropha (strain DSM 101675 / C91 / Nm57).